The sequence spans 120 residues: Late histone H2A.2.2 (120 aa).

A compositionally biased stretch (basic residues) spans 1 to 18 (MSGRGKGAKSKSKAKSRS). The interval 1–22 (MSGRGKGAKSKSKAKSRSSRAG) is disordered. An N-acetylserine modification is found at serine 2. Serine 2 bears the Phosphoserine mark. Glutamine 104 carries the post-translational modification N5-methylglutamine. Lysine 119 is covalently cross-linked (Glycyl lysine isopeptide (Lys-Gly) (interchain with G-Cter in ubiquitin)).

The protein belongs to the histone H2A family. As to quaternary structure, the nucleosome is a histone octamer containing two molecules each of H2A, H2B, H3 and H4 assembled in one H3-H4 heterotetramer and two H2A-H2B heterodimers. The octamer wraps approximately 147 bp of DNA. In terms of processing, monoubiquitination of Lys-119 gives a specific tag for epigenetic transcriptional repression. Phosphorylation of Ser-2 directly represses transcription.

The protein localises to the nucleus. It is found in the chromosome. Core component of nucleosome. Nucleosomes wrap and compact DNA into chromatin, limiting DNA accessibility to the cellular machineries which require DNA as a template. Histones thereby play a central role in transcription regulation, DNA repair, DNA replication and chromosomal stability. DNA accessibility is regulated via a complex set of post-translational modifications of histones, also called histone code, and nucleosome remodeling. This chain is Late histone H2A.2.2, found in Psammechinus miliaris (Green sea urchin).